We begin with the raw amino-acid sequence, 463 residues long: Senescence/dehydration-associated protein At3g51250 (463 aa).

The span at 1–12 (MNPSHGGDDKQR) shows a compositional bias: basic and acidic residues. 3 disordered regions span residues 1-31 (MNPSHGGDDKQRPAMYPQVDQSIPDNPFAST), 52-74 (PNLFPDHGDASNDQSPSAPPQAT), and 146-172 (IHPPKEKGQGSGSDSDDEQGQKSKSKS). Residues 19 to 31 (VDQSIPDNPFAST) are compositionally biased toward polar residues. One can recognise a Senescence domain in the interval 269–437 (IASGSGKLIR…AWVAFKIRKA (169 aa)).

The chain is Senescence/dehydration-associated protein At3g51250 from Arabidopsis thaliana (Mouse-ear cress).